Consider the following 442-residue polypeptide: O-methyltransferase pgmB (442 aa).

S-adenosyl-L-methionine is bound at residue Asp291. The active-site Proton acceptor is the His341.

Belongs to the class I-like SAM-binding methyltransferase superfamily. Cation-independent O-methyltransferase family.

It participates in pigment biosynthesis. The protein operates within secondary metabolite biosynthesis. In terms of biological role, O-methyltransferase; part of the gene cluster that mediates the biosynthesis of pleosporalin A, ascomycone A, as well as a third cryptic naphthoquinone derived pigment, all responsible for the coloration of conidia. Specifically methylates position C-6 of the pgmA product 3-acetonyl-1,6,8-trihydroxy-2-naphthaldehyde to yield fusarubinaldehyde. The pathway begins with the biosynthesis of the cyclized heptaketide 3-acetonyl-1,6,8-trihydroxy-2-naphthaldehyde by the NR-PKS pgmA. The C-6 hydroxyl group is further methylated by the O-methyltransferase pgmB to yield fusarubinaldehyde which is in turn oxidized by the cytochrome P450 monooxygenase pgmC at C-9. The C-1 hydroxyl group is then methylated spontaneously. Although pgmE, pgmD and pgmH are essential for the production of pleosporalin A, it is not the case for the 2 other final products and it remains difficult to assign a specific function to each enzyme. PgmF and pgmG seem not to be involved in pigment biosynthesis although they were regulated by the cluster-specific transcription factor pgmR. The chain is O-methyltransferase pgmB from Aspergillus terreus.